Here is a 384-residue protein sequence, read N- to C-terminus: S-adenosylmethionine synthase (384 aa).

Residue H15 participates in ATP binding. Mg(2+) is bound at residue D17. E43 serves as a coordination point for K(+). Residues E56 and Q99 each contribute to the L-methionine site. Residues 99 to 109 (QSPDINQGVDR) are flexible loop. Residues 164–166 (DAK), 230–231 (RF), D239, 245–246 (RK), A262, and K266 each bind ATP. D239 is a binding site for L-methionine. K270 is an L-methionine binding site.

This sequence belongs to the AdoMet synthase family. In terms of assembly, homotetramer; dimer of dimers. The cofactor is Mg(2+). It depends on K(+) as a cofactor.

The protein resides in the cytoplasm. The catalysed reaction is L-methionine + ATP + H2O = S-adenosyl-L-methionine + phosphate + diphosphate. It participates in amino-acid biosynthesis; S-adenosyl-L-methionine biosynthesis; S-adenosyl-L-methionine from L-methionine: step 1/1. Catalyzes the formation of S-adenosylmethionine (AdoMet) from methionine and ATP. The overall synthetic reaction is composed of two sequential steps, AdoMet formation and the subsequent tripolyphosphate hydrolysis which occurs prior to release of AdoMet from the enzyme. This Erwinia tasmaniensis (strain DSM 17950 / CFBP 7177 / CIP 109463 / NCPPB 4357 / Et1/99) protein is S-adenosylmethionine synthase.